The chain runs to 933 residues: Myocardin (933 aa).

The MEF2C-binding signature appears at Ile-12–Arg-27. RPEL repeat units follow at residues Ser-18 to Arg-43, Asp-62 to Ser-87, and Asp-106 to Cys-131. Residues Phe-153–Asn-205 are HDAC5-binding. Disordered regions lie at residues Glu-154 to Met-282 and Asn-324 to Pro-365. Polar residues predominate over residues Ser-210–Leu-220. Positions Asn-248–Tyr-265 are enriched in basic residues. The span at Asn-330 to Ala-346 shows a compositional bias: low complexity. The segment covering Lys-347–Ser-357 has biased composition (polar residues). The region spanning Leu-368–Gln-402 is the SAP domain. A phosphoserine; by GSK3-beta mark is found at Ser-445, Ser-449, Ser-453, and Ser-457. The stretch at Leu-515–Thr-550 forms a coiled coil. Residues Asp-568–Ser-613 form a disordered region. A phosphoserine; by GSK3-beta mark is found at Ser-621, Ser-625, Ser-629, and Ser-633. Disordered stretches follow at residues Pro-630–Pro-672 and Pro-760–Tyr-794. The required for interaction with and ubiquitination by STUB1 stretch occupies residues Ile-712–Trp-933. 3 positions are modified to phosphoserine; by MAPK1 and MAPK3: Ser-810, Ser-857, and Ser-864. Thr-891 is modified (phosphothreonine; by MAPK1 and MAPK3).

Homodimer. Interacts with MLLT7/FOXO4. Interacts with SRF, its association does not depend on specific DNA sequences for ternary complex formation. Interacts (via C-terminal) with EP300 (via the CREB-binding domain). Interacts with HDAC4 and HDAC5. Interacts with MEF2C. Interacts (via C-terminus) with STUB1/CHIP. Interacts with PURB. Ubiquitinated; by STUB1/CHIP at the C-terminus, leading to its degradation by the proteasome. Phosphorylation by GSK3B is required for STUB1/CHIP-mediated ubiquitination. In terms of processing, phosphorylation negatively regulates the intrinsic myocardin transcriptional activity. Phosphorylated; by GSK3B. As to expression, expressed in the heart and in smooth muscle cells-containing tissues (aorta, pulmonary vein, lung), but is not detectable in skeletal muscle, liver, kidney and spleen.

It localises to the nucleus. Smooth muscle cells (SM) and cardiac muscle cells-specific transcriptional factor which uses the canonical single or multiple CArG boxes DNA sequence. Acts as a cofactor of serum response factor (SRF) with the potential to modulate SRF-target genes. Plays a crucial role in cardiogenesis, urinary bladder development, and differentiation of the smooth muscle cell lineage (myogenesis). Positively regulates the transcription of genes involved in vascular smooth muscle contraction. This Sus scrofa (Pig) protein is Myocardin (MYOCD).